Here is a 530-residue protein sequence, read N- to C-terminus: Ubiquitin carboxyl-terminal hydrolase 17-like protein 11 (530 aa).

In terms of domain architecture, USP spans 80–375; sequence AGLQNMGNTC…QAYVLFYIQK (296 aa). C89 acts as the Nucleophile in catalysis. H334 functions as the Proton acceptor in the catalytic mechanism. Composition is skewed to basic and acidic residues over residues 382–392 and 398–413; these read SESVSRGREPR and DTDR…RDHP. Disordered regions lie at residues 382 to 413 and 509 to 530; these read SESV…RDHP and RGRA…LVCQ. A compositionally biased stretch (basic residues) spans 510 to 524; that stretch reads GRARRSKGKNKHSKR.

This sequence belongs to the peptidase C19 family. USP17 subfamily.

It is found in the nucleus. Its subcellular location is the endoplasmic reticulum. The enzyme catalyses Thiol-dependent hydrolysis of ester, thioester, amide, peptide and isopeptide bonds formed by the C-terminal Gly of ubiquitin (a 76-residue protein attached to proteins as an intracellular targeting signal).. Functionally, deubiquitinating enzyme that removes conjugated ubiquitin from specific proteins to regulate different cellular processes that may include cell proliferation, progression through the cell cycle, apoptosis, cell migration, and the cellular response to viral infection. The chain is Ubiquitin carboxyl-terminal hydrolase 17-like protein 11 (USP17L11) from Homo sapiens (Human).